The following is a 315-amino-acid chain: Calcium homeostasis modulator protein 4 (315 aa).

At 1 to 14 (MSPDLNCISSSLLR) the chain is on the cytoplasmic side. The helical transmembrane segment at 15 to 37 (SEPCINSLIAILTVCGQQLFSSY) threads the bilayer. The Extracellular portion of the chain corresponds to 38-48 (TFSCPCQVGKN). 2 cysteine pairs are disulfide-bonded: cysteine 41/cysteine 132 and cysteine 43/cysteine 163. A helical membrane pass occupies residues 49–71 (FYYGSAFLVVPALILLIAGYALR). The Cytoplasmic portion of the chain corresponds to 72–104 (GQMWTVASEYCCCSCTPPYRRSSPLERRLACLM). A helical transmembrane segment spans residues 105 to 130 (FFDITGRALVAPLTWLTVTLLTGTYY). Topologically, residues 131 to 184 (ECAASEFASVDQYPMFANVTPSKREEMLAGFPCYTSAPSDVIPIRDEVALLHRY) are extracellular. Residues 185 to 208 (QSQMLGWILVVLATIALLLSKCLA) traverse the membrane as a helical segment. Residues 209-315 (RCCSPLTSLQ…DRQEGIEMKP (107 aa)) are Cytoplasmic-facing.

It belongs to the CALHM family. In terms of assembly, oligomerizes to form decameric and undecameric channels. Two hemichannels can assemble in a tail-to-tail manner to form a gap junction.

It localises to the cell membrane. Functionally, may assemble to form gap junction channel-like structures involved in intercellular communication. Channel gating and ion conductance are likely regulated by membrane lipids rather than by membrane depolarization or extracellular calcium levels. This chain is Calcium homeostasis modulator protein 4, found in Mus musculus (Mouse).